Here is a 507-residue protein sequence, read N- to C-terminus: Probable cytosol aminopeptidase (507 aa).

Positions 271 and 276 each coordinate Mn(2+). Lysine 283 is an active-site residue. Mn(2+)-binding residues include aspartate 294, aspartate 353, and glutamate 355. The active site involves arginine 357.

This sequence belongs to the peptidase M17 family. Mn(2+) is required as a cofactor.

The protein resides in the cytoplasm. The enzyme catalyses Release of an N-terminal amino acid, Xaa-|-Yaa-, in which Xaa is preferably Leu, but may be other amino acids including Pro although not Arg or Lys, and Yaa may be Pro. Amino acid amides and methyl esters are also readily hydrolyzed, but rates on arylamides are exceedingly low.. It carries out the reaction Release of an N-terminal amino acid, preferentially leucine, but not glutamic or aspartic acids.. Presumably involved in the processing and regular turnover of intracellular proteins. Catalyzes the removal of unsubstituted N-terminal amino acids from various peptides. This Nitratidesulfovibrio vulgaris (strain ATCC 29579 / DSM 644 / CCUG 34227 / NCIMB 8303 / VKM B-1760 / Hildenborough) (Desulfovibrio vulgaris) protein is Probable cytosol aminopeptidase.